Reading from the N-terminus, the 189-residue chain is Protein GrpE (189 aa).

A disordered region spans residues 1 to 24 (MADEQTVDTQNPEANQAPEASGDD).

It belongs to the GrpE family. As to quaternary structure, homodimer.

The protein resides in the cytoplasm. Its function is as follows. Participates actively in the response to hyperosmotic and heat shock by preventing the aggregation of stress-denatured proteins, in association with DnaK and GrpE. It is the nucleotide exchange factor for DnaK and may function as a thermosensor. Unfolded proteins bind initially to DnaJ; upon interaction with the DnaJ-bound protein, DnaK hydrolyzes its bound ATP, resulting in the formation of a stable complex. GrpE releases ADP from DnaK; ATP binding to DnaK triggers the release of the substrate protein, thus completing the reaction cycle. Several rounds of ATP-dependent interactions between DnaJ, DnaK and GrpE are required for fully efficient folding. The protein is Protein GrpE of Pseudomonas fluorescens (strain Pf0-1).